Consider the following 432-residue polypeptide: Adenylosuccinate synthetase (432 aa).

GTP-binding positions include 12–18 (GDEGKGK) and 40–42 (GHT). Aspartate 13 acts as the Proton acceptor in catalysis. The Mg(2+) site is built by aspartate 13 and glycine 40. IMP is bound by residues 13–16 (DEGK), 38–41 (NAGH), threonine 129, arginine 143, glutamine 224, threonine 239, and arginine 303. Catalysis depends on histidine 41, which acts as the Proton donor. 299-305 (VTTGRRR) contributes to the substrate binding site. GTP is bound by residues arginine 305, 331 to 333 (KLD), and 413 to 415 (GVG).

It belongs to the adenylosuccinate synthetase family. Homodimer. The cofactor is Mg(2+).

The protein resides in the cytoplasm. It carries out the reaction IMP + L-aspartate + GTP = N(6)-(1,2-dicarboxyethyl)-AMP + GDP + phosphate + 2 H(+). The protein operates within purine metabolism; AMP biosynthesis via de novo pathway; AMP from IMP: step 1/2. Plays an important role in the de novo pathway of purine nucleotide biosynthesis. Catalyzes the first committed step in the biosynthesis of AMP from IMP. The polypeptide is Adenylosuccinate synthetase (Mycobacterium marinum (strain ATCC BAA-535 / M)).